The following is a 159-amino-acid chain: Ribosomal RNA large subunit methyltransferase H (159 aa).

Residues Leu76, Gly108, and 127 to 132 (FSHMTF) each bind S-adenosyl-L-methionine.

This sequence belongs to the RNA methyltransferase RlmH family. As to quaternary structure, homodimer.

Its subcellular location is the cytoplasm. The enzyme catalyses pseudouridine(1915) in 23S rRNA + S-adenosyl-L-methionine = N(3)-methylpseudouridine(1915) in 23S rRNA + S-adenosyl-L-homocysteine + H(+). Specifically methylates the pseudouridine at position 1915 (m3Psi1915) in 23S rRNA. This Halothermothrix orenii (strain H 168 / OCM 544 / DSM 9562) protein is Ribosomal RNA large subunit methyltransferase H.